We begin with the raw amino-acid sequence, 128 residues long: Large ribosomal subunit protein uL22 (128 aa).

It belongs to the universal ribosomal protein uL22 family. In terms of assembly, part of the 50S ribosomal subunit.

Its function is as follows. This protein binds specifically to 23S rRNA; its binding is stimulated by other ribosomal proteins, e.g. L4, L17, and L20. It is important during the early stages of 50S assembly. It makes multiple contacts with different domains of the 23S rRNA in the assembled 50S subunit and ribosome. In terms of biological role, the globular domain of the protein is located near the polypeptide exit tunnel on the outside of the subunit, while an extended beta-hairpin is found that lines the wall of the exit tunnel in the center of the 70S ribosome. In Methylobacterium radiotolerans (strain ATCC 27329 / DSM 1819 / JCM 2831 / NBRC 15690 / NCIMB 10815 / 0-1), this protein is Large ribosomal subunit protein uL22.